Consider the following 631-residue polypeptide: Chaperone protein DnaK (631 aa).

Residue T175 is modified to Phosphothreonine; by autocatalysis. A disordered region spans residues 586-631; that stretch reads GAEGAAAGAGAAGAAGAGASAGSASGSDDDTVEAEVVDDDDDKDNK. Low complexity predominate over residues 602-611; that stretch reads AGASAGSASG. Over residues 612-631 the composition is skewed to acidic residues; the sequence is SDDDTVEAEVVDDDDDKDNK.

It belongs to the heat shock protein 70 family.

Acts as a chaperone. This Bifidobacterium longum subsp. infantis (strain ATCC 15697 / DSM 20088 / JCM 1222 / NCTC 11817 / S12) protein is Chaperone protein DnaK.